The sequence spans 166 residues: Large ribosomal subunit protein uL10 (166 aa).

Belongs to the universal ribosomal protein uL10 family. As to quaternary structure, part of the ribosomal stalk of the 50S ribosomal subunit. The N-terminus interacts with L11 and the large rRNA to form the base of the stalk. The C-terminus forms an elongated spine to which L12 dimers bind in a sequential fashion forming a multimeric L10(L12)X complex.

Its function is as follows. Forms part of the ribosomal stalk, playing a central role in the interaction of the ribosome with GTP-bound translation factors. The protein is Large ribosomal subunit protein uL10 of Listeria innocua serovar 6a (strain ATCC BAA-680 / CLIP 11262).